The chain runs to 185 residues: Cbp/p300-interacting transactivator 4 (185 aa).

Disordered regions lie at residues 15–64 (PRPP…VAYG) and 95–130 (YPGR…AHAL). The span at 103–125 (PGAPGGPSGPQPAPGAPAPPLQP) shows a compositional bias: pro residues.

It belongs to the CITED family. Interacts via its C-terminal region with the CH1 domain of CREBBP and EP300. Interacts with all TFAP2/AP-2 isoforms.

The protein resides in the nucleus. Its subcellular location is the cytoplasm. Functionally, acts as a transcriptional coactivator for TFAP2/AP-2. Enhances estrogen-dependent transactivation mediated by estrogen receptors. May function as an inhibitor of transactivation by HIF1A by disrupting HIF1A interaction with CREBBP. May be involved in regulation of gene expression during development and differentiation of blood cells, endothelial cells and mammary epithelial cells. This Bos taurus (Bovine) protein is Cbp/p300-interacting transactivator 4 (CITED4).